Here is a 238-residue protein sequence, read N- to C-terminus: Ribitol-5-phosphate cytidylyltransferase (238 aa).

Residues 7–10 (LAGG) and 81–87 (GDDRNHS) contribute to the CTP site.

The protein belongs to the IspD/TarI cytidylyltransferase family. TarI subfamily.

The catalysed reaction is D-ribitol 5-phosphate + CTP + H(+) = CDP-L-ribitol + diphosphate. Its pathway is cell wall biogenesis; poly(ribitol phosphate) teichoic acid biosynthesis. Functionally, catalyzes the transfer of the cytidylyl group of CTP to D-ribitol 5-phosphate. The polypeptide is Ribitol-5-phosphate cytidylyltransferase (Staphylococcus epidermidis (strain ATCC 12228 / FDA PCI 1200)).